Here is a 444-residue protein sequence, read N- to C-terminus: Protein EMP46 (444 aa).

The signal sequence occupies residues 1-46; sequence MTTRKTASSLQLLGKITGTKAGTKQKKMNFINGLIWLYMCVWMVHG. The Lumenal portion of the chain corresponds to 47 to 408; the sequence is KVTQKDELKW…YGKQTKGHDE (362 aa). Residues 52-269 form the L-type lectin-like domain; the sequence is DELKWNKGYS…EILKMKLYDG (218 aa). Y177 is a K(+) binding site. An intrachain disulfide couples C196 to C230. The helical transmembrane segment at 409 to 429 threads the bilayer; it reads IFSKISVWLALLIFIMITLAY. The mediates the interactions with COPI and COPII coat complexes stretch occupies residues 429–432; it reads YYMF. Over 430–444 the chain is Cytoplasmic; sequence YMFRINQDIKKVKLL. A Di-lysine motif motif is present at residues 440 to 444; it reads KVKLL.

It belongs to the EMP46/EMP47 family. Interacts with EMP47 in the endoplasmic reticulum membrane in order to be transported to the Golgi apparatus. Interacts with the coatomer proteins COP1, SEC21 and SEC23.

The protein localises to the golgi apparatus membrane. It is found in the endoplasmic reticulum membrane. Its function is as follows. Involved in the secretion of glycoproteins and in nucleus architecture and gene silencing. This Saccharomyces cerevisiae (strain ATCC 204508 / S288c) (Baker's yeast) protein is Protein EMP46 (EMP46).